Consider the following 149-residue polypeptide: D-aminoacyl-tRNA deacylase (149 aa).

Residues 137–138 (GP) carry the Gly-cisPro motif, important for rejection of L-amino acids motif.

It belongs to the DTD family. In terms of assembly, homodimer.

The protein resides in the cytoplasm. It carries out the reaction glycyl-tRNA(Ala) + H2O = tRNA(Ala) + glycine + H(+). The enzyme catalyses a D-aminoacyl-tRNA + H2O = a tRNA + a D-alpha-amino acid + H(+). Functionally, an aminoacyl-tRNA editing enzyme that deacylates mischarged D-aminoacyl-tRNAs. Also deacylates mischarged glycyl-tRNA(Ala), protecting cells against glycine mischarging by AlaRS. Acts via tRNA-based rather than protein-based catalysis; rejects L-amino acids rather than detecting D-amino acids in the active site. By recycling D-aminoacyl-tRNA to D-amino acids and free tRNA molecules, this enzyme counteracts the toxicity associated with the formation of D-aminoacyl-tRNA entities in vivo and helps enforce protein L-homochirality. In Syntrophus aciditrophicus (strain SB), this protein is D-aminoacyl-tRNA deacylase.